The chain runs to 298 residues: Diphthine methyl ester synthase (298 aa).

Residues leucine 9, aspartate 85, glycine 88, 113 to 114 (SV), leucine 164, leucine 222, and histidine 247 each bind S-adenosyl-L-methionine.

Belongs to the diphthine synthase family.

The protein localises to the cytoplasm. It carries out the reaction 2-[(3S)-amino-3-carboxypropyl]-L-histidyl-[translation elongation factor 2] + 4 S-adenosyl-L-methionine = diphthine methyl ester-[translation elongation factor 2] + 4 S-adenosyl-L-homocysteine + 3 H(+). It functions in the pathway protein modification; peptidyl-diphthamide biosynthesis. In terms of biological role, S-adenosyl-L-methionine-dependent methyltransferase that catalyzes four methylations of the modified target histidine residue in translation elongation factor 2 (EF-2), to form an intermediate called diphthine methyl ester. The four successive methylation reactions represent the second step of diphthamide biosynthesis. The chain is Diphthine methyl ester synthase (DPH5) from Candida glabrata (strain ATCC 2001 / BCRC 20586 / JCM 3761 / NBRC 0622 / NRRL Y-65 / CBS 138) (Yeast).